The sequence spans 1579 residues: DNA-directed RNA polymerase II subunit RPB1 (1579 aa).

Residues C68, C71, C78, H81, C108, C111, C149, and C171 each coordinate Zn(2+). Positions 485, 487, and 489 each coordinate Mg(2+). A bridging helix region spans residues 642-654; that stretch reads PQEFFFHAMAGRE. A Glycyl lysine isopeptide (Lys-Gly) (interchain with G-Cter in ubiquitin) cross-link involves residue K1080. Low complexity predominate over residues 1382–1565; it reads SPTYSPTSPS…NSPQYSPRSP (184 aa). The tract at residues 1382–1579 is disordered; that stretch reads SPTYSPTSPS…DQNDDKDKKQ (198 aa). 16 consecutive repeat copies span residues 1385-1391, 1392-1398, 1399-1405, 1406-1412, 1413-1419, 1420-1426, 1427-1433, 1434-1440, 1441-1447, 1448-1454, 1455-1461, 1462-1468, 1469-1475, 1476-1482, 1483-1489, and 1490-1496. Residues 1385–1566 are C-terminal domain (CTD); 26 X 7 AA approximate tandem repeats of Y-S-P-T-S-P-[S-A-Q]; it reads YSPTSPSYSP…SPQYSPRSPL (182 aa). A 17; approximate repeat occupies 1497–1503; the sequence is YSPTSPL. Tandem repeats lie at residues 1504-1510, 1511-1517, 1518-1524, 1525-1531, 1532-1538, 1539-1545, and 1546-1552. The 25; approximate repeat unit spans residues 1553–1559; that stretch reads YSPNSPQ. One copy of the 26; approximate repeat lies at 1560 to 1566; sequence YSPRSPL.

It belongs to the RNA polymerase beta' chain family. In terms of assembly, component of the RNA polymerase II (Pol II) complex consisting of 12 subunits. Post-translationally, the tandem 7 residues repeats in the C-terminal domain (CTD) can be highly phosphorylated. The phosphorylation activates Pol II. Phosphorylation occurs mainly at residues 'Ser-2' and 'Ser-5' of the heptapeptide repeat. The phosphorylation state is believed to result from the balanced action of site-specific CTD kinases and phosphatase, and a 'CTD code' that specifies the position of Pol II within the transcription cycle has been proposed. Following transcription stress, the elongating form of RNA polymerase II (RNA pol IIo) is polyubiquitinated via 'Lys-63'-linkages on Lys-1080 at DNA damage sites without leading to degradation: ubiquitination promotes RNA pol IIo backtracking to allow access by the transcription-coupled nucleotide excision repair (TC-NER) machinery. Subsequent DEF1-dependent polyubiquitination by the elongin complex via 'Lys-48'-linkages may lead to proteasome-mediated degradation; presumably at stalled RNA pol II where TC-NER has failed, to halt global transcription and enable 'last resort' DNA repair pathways.

The protein resides in the nucleus. The enzyme catalyses RNA(n) + a ribonucleoside 5'-triphosphate = RNA(n+1) + diphosphate. In terms of biological role, DNA-dependent RNA polymerase catalyzes the transcription of DNA into RNA using the four ribonucleoside triphosphates as substrates. Largest and catalytic component of RNA polymerase II which synthesizes mRNA precursors and many functional non-coding RNAs. Forms the polymerase active center together with the second largest subunit. Pol II is the central component of the basal RNA polymerase II transcription machinery. It is composed of mobile elements that move relative to each other. RPB1 is part of the core element with the central large cleft, the clamp element that moves to open and close the cleft and the jaws that are thought to grab the incoming DNA template. At the start of transcription, a single-stranded DNA template strand of the promoter is positioned within the central active site cleft of Pol II. A bridging helix emanates from RPB1 and crosses the cleft near the catalytic site and is thought to promote translocation of Pol II by acting as a ratchet that moves the RNA-DNA hybrid through the active site by switching from straight to bent conformations at each step of nucleotide addition. During transcription elongation, Pol II moves on the template as the transcript elongates. Elongation is influenced by the phosphorylation status of the C-terminal domain (CTD) of Pol II largest subunit (RPB1), which serves as a platform for assembly of factors that regulate transcription initiation, elongation, termination and mRNA processing. This Meyerozyma guilliermondii (strain ATCC 6260 / CBS 566 / DSM 6381 / JCM 1539 / NBRC 10279 / NRRL Y-324) (Yeast) protein is DNA-directed RNA polymerase II subunit RPB1 (RPB1).